Consider the following 427-residue polypeptide: Glycophorin-binding protein-related antigen (427 aa).

8 GBP repeats span residues 109–149 (LTSA…DELE), 150–189 (TSAD…DEVE), 190–229 (SSAD…DELE), 230–269 (TSAD…EVET), 270–307 (SADP…SEVE), 308–347 (TSAD…DELE), 348–387 (TSAD…DELE), and 388–427 (TSAD…DESS).

The sequence is that of Glycophorin-binding protein-related antigen (GBPH) from Plasmodium falciparum (isolate FCBR / Columbia).